The following is a 428-amino-acid chain: C4-dicarboxylate transport protein (428 aa).

8 helical membrane-spanning segments follow: residues 8–28 (SLYF…HFYP), 44–64 (LIKM…IAGM), 76–96 (VALL…LIIV), 142–162 (IGAF…LFGF), 184–204 (VIFG…FGAM), 222–242 (LIIC…GSIA), 326–346 (IVHQ…AAGV), and 352–372 (IVLA…LALI).

Belongs to the dicarboxylate/amino acid:cation symporter (DAACS) (TC 2.A.23) family.

Its subcellular location is the cell inner membrane. Its function is as follows. Responsible for the transport of dicarboxylates such as succinate, fumarate, and malate from the periplasm across the membrane. The sequence is that of C4-dicarboxylate transport protein from Shigella dysenteriae serotype 1 (strain Sd197).